The following is a 502-amino-acid chain: Probable cytosol aminopeptidase (502 aa).

Residues Lys265 and Asp270 each contribute to the Mn(2+) site. Lys277 is an active-site residue. Mn(2+) contacts are provided by Asp288, Asp347, and Glu349. Residue Arg351 is part of the active site.

Belongs to the peptidase M17 family. Mn(2+) is required as a cofactor.

It is found in the cytoplasm. The catalysed reaction is Release of an N-terminal amino acid, Xaa-|-Yaa-, in which Xaa is preferably Leu, but may be other amino acids including Pro although not Arg or Lys, and Yaa may be Pro. Amino acid amides and methyl esters are also readily hydrolyzed, but rates on arylamides are exceedingly low.. The enzyme catalyses Release of an N-terminal amino acid, preferentially leucine, but not glutamic or aspartic acids.. In terms of biological role, presumably involved in the processing and regular turnover of intracellular proteins. Catalyzes the removal of unsubstituted N-terminal amino acids from various peptides. The chain is Probable cytosol aminopeptidase from Rickettsia bellii (strain RML369-C).